Consider the following 494-residue polypeptide: Chromosomal replication initiator protein DnaA (494 aa).

A domain I, interacts with DnaA modulators region spans residues 1-103 (MTTDPDPPFV…PVSDESDSGS (103 aa)). The interval 94-117 (PVSDESDSGSVASPAPVAAADPDD) is disordered. Residues 101 to 113 (SGSVASPAPVAAA) are compositionally biased toward low complexity. Residues 104-153 (VASPAPVAAADPDDDVVDDDLAARASAEESWPSYFTNRANRAAEDDATSV) are domain II. Residues 154–370 (NLNRRYTFDT…GALIRVTAFA (217 aa)) are domain III, AAA+ region. ATP-binding residues include glycine 198, glycine 200, lysine 201, and threonine 202. The interval 371-494 (SLNKTPIDKS…TTRIRQRAKR (124 aa)) is domain IV, binds dsDNA.

This sequence belongs to the DnaA family. In terms of assembly, oligomerizes as a right-handed, spiral filament on DNA at oriC.

It is found in the cytoplasm. Its function is as follows. Plays an essential role in the initiation and regulation of chromosomal replication. ATP-DnaA binds to the origin of replication (oriC) to initiate formation of the DNA replication initiation complex once per cell cycle. Binds the DnaA box (a 9 base pair repeat at the origin) and separates the double-stranded (ds)DNA. Forms a right-handed helical filament on oriC DNA; dsDNA binds to the exterior of the filament while single-stranded (ss)DNA is stabiized in the filament's interior. The ATP-DnaA-oriC complex binds and stabilizes one strand of the AT-rich DNA unwinding element (DUE), permitting loading of DNA polymerase. After initiation quickly degrades to an ADP-DnaA complex that is not apt for DNA replication. Binds acidic phospholipids. The polypeptide is Chromosomal replication initiator protein DnaA (Mycolicibacterium vanbaalenii (strain DSM 7251 / JCM 13017 / BCRC 16820 / KCTC 9966 / NRRL B-24157 / PYR-1) (Mycobacterium vanbaalenii)).